The sequence spans 414 residues: MEVEVKAKQAKAAARRMAVLDENTKNLALNHMADALIKDMGKILEANKKDVVEAEKRNIKASLIDRLKLDEKRVEAMAKGLREISALPDPVGSIEKMWKRPNGLQIGKMRVPIGVIGIIYESRPNVTADAAGLCLKSGNAVILRGGSDAINSNIAISSILAKAAYETGIPEGAIQLIENTDREEVNRMMKLNGLIDLIIPRGGASLIKNVIENSTVPVIETGVGNCHIFVDETAKFNIAKDIIVNAKVQRPGVCNAVETVLVHKSIAKEFLPLMVEELTSLGVEIRGCQITKEICPQVKEATDKDWETEYLDLILAVKVVDGIEEALDHISKYSTGHSESIITENYENAMMFLKSVDSAAVYVNASTRFTDGGEFGFGAEIGISTQKMHARGPMGLEELTTYKYVILGSGQIRK.

The protein belongs to the gamma-glutamyl phosphate reductase family.

Its subcellular location is the cytoplasm. The enzyme catalyses L-glutamate 5-semialdehyde + phosphate + NADP(+) = L-glutamyl 5-phosphate + NADPH + H(+). It functions in the pathway amino-acid biosynthesis; L-proline biosynthesis; L-glutamate 5-semialdehyde from L-glutamate: step 2/2. Functionally, catalyzes the NADPH-dependent reduction of L-glutamate 5-phosphate into L-glutamate 5-semialdehyde and phosphate. The product spontaneously undergoes cyclization to form 1-pyrroline-5-carboxylate. This chain is Gamma-glutamyl phosphate reductase, found in Thermoanaerobacter sp. (strain X514).